The primary structure comprises 351 residues: Small ribosomal subunit biogenesis GTPase RsgA (351 aa).

The region spanning 107–277 (ENLLQRPDNF…LIDSPGIREF (171 aa)) is the CP-type G domain. GTP-binding positions include 163-166 (NKTD) and 219-227 (GQSGVGKSS). Residues Cys301, Cys306, His308, and Cys314 each contribute to the Zn(2+) site.

It belongs to the TRAFAC class YlqF/YawG GTPase family. RsgA subfamily. In terms of assembly, monomer. Associates with 30S ribosomal subunit, binds 16S rRNA. It depends on Zn(2+) as a cofactor.

It localises to the cytoplasm. Its function is as follows. One of several proteins that assist in the late maturation steps of the functional core of the 30S ribosomal subunit. Helps release RbfA from mature subunits. May play a role in the assembly of ribosomal proteins into the subunit. Circularly permuted GTPase that catalyzes slow GTP hydrolysis, GTPase activity is stimulated by the 30S ribosomal subunit. The protein is Small ribosomal subunit biogenesis GTPase RsgA of Marinobacter nauticus (strain ATCC 700491 / DSM 11845 / VT8) (Marinobacter aquaeolei).